The sequence spans 396 residues: Elongation factor Tu (396 aa).

A tr-type G domain is found at 10 to 206; the sequence is KPHVNVGTIG…ALDTYIPTPE (197 aa). Residues 19–26 are G1; the sequence is GHVDHGKT. 19 to 26 is a binding site for GTP; that stretch reads GHVDHGKT. Thr-26 lines the Mg(2+) pocket. The interval 60 to 64 is G2; that stretch reads GITIN. Residues 81–84 are G3; the sequence is DCPG. GTP-binding positions include 81-85 and 136-139; these read DCPGH and NKCD. Residues 136 to 139 form a G4 region; the sequence is NKCD. The G5 stretch occupies residues 174–176; that stretch reads SAK.

Belongs to the TRAFAC class translation factor GTPase superfamily. Classic translation factor GTPase family. EF-Tu/EF-1A subfamily. Monomer.

It is found in the cytoplasm. It catalyses the reaction GTP + H2O = GDP + phosphate + H(+). Functionally, GTP hydrolase that promotes the GTP-dependent binding of aminoacyl-tRNA to the A-site of ribosomes during protein biosynthesis. In Polynucleobacter asymbioticus (strain DSM 18221 / CIP 109841 / QLW-P1DMWA-1) (Polynucleobacter necessarius subsp. asymbioticus), this protein is Elongation factor Tu.